The chain runs to 200 residues: UPF0301 protein BruAb1_0502 (200 aa).

It belongs to the UPF0301 (AlgH) family.

The chain is UPF0301 protein BruAb1_0502 from Brucella abortus biovar 1 (strain 9-941).